A 25-amino-acid chain; its full sequence is uncharacterized protein (25 aa).

This is an uncharacterized protein from Escherichia coli (Bacteriophage T3).